Reading from the N-terminus, the 213-residue chain is Pyrrolidone-carboxylate peptidase (213 aa).

Residues glutamate 78, cysteine 141, and histidine 165 contribute to the active site.

The protein belongs to the peptidase C15 family. Homotetramer.

Its subcellular location is the cytoplasm. The enzyme catalyses Release of an N-terminal pyroglutamyl group from a polypeptide, the second amino acid generally not being Pro.. Its function is as follows. Removes 5-oxoproline from various penultimate amino acid residues except L-proline. The protein is Pyrrolidone-carboxylate peptidase of Clostridium perfringens (strain SM101 / Type A).